A 545-amino-acid chain; its full sequence is Methionine--tRNA ligase (545 aa).

The short motif at 15-25 (PYANGPIHIGH) is the 'HIGH' region element. Zn(2+) is bound by residues Cys146, Cys149, Cys159, and Cys162. A 'KMSKS' region motif is present at residues 332-336 (KLSKS). Residue Lys335 coordinates ATP.

The protein belongs to the class-I aminoacyl-tRNA synthetase family. MetG type 1 subfamily. As to quaternary structure, monomer. Zn(2+) is required as a cofactor.

The protein localises to the cytoplasm. It catalyses the reaction tRNA(Met) + L-methionine + ATP = L-methionyl-tRNA(Met) + AMP + diphosphate. Is required not only for elongation of protein synthesis but also for the initiation of all mRNA translation through initiator tRNA(fMet) aminoacylation. The chain is Methionine--tRNA ligase (metG) from Buchnera aphidicola subsp. Schizaphis graminum (strain Sg).